A 409-amino-acid chain; its full sequence is S-adenosylmethionine synthase (409 aa).

An ATP-binding site is contributed by H15. A Mg(2+)-binding site is contributed by D17. Residue E43 coordinates K(+). L-methionine contacts are provided by E56 and Q100. The flexible loop stretch occupies residues 100-110 (QSSDIAQGVNE). ATP is bound by residues 171 to 173 (DGK), 248 to 249 (KF), D257, 263 to 264 (RK), A280, and K284. D257 serves as a coordination point for L-methionine. K288 is an L-methionine binding site.

Belongs to the AdoMet synthase family. In terms of assembly, homotetramer; dimer of dimers. Requires Mg(2+) as cofactor. K(+) is required as a cofactor.

Its subcellular location is the cytoplasm. It catalyses the reaction L-methionine + ATP + H2O = S-adenosyl-L-methionine + phosphate + diphosphate. Its pathway is amino-acid biosynthesis; S-adenosyl-L-methionine biosynthesis; S-adenosyl-L-methionine from L-methionine: step 1/1. Functionally, catalyzes the formation of S-adenosylmethionine (AdoMet) from methionine and ATP. The overall synthetic reaction is composed of two sequential steps, AdoMet formation and the subsequent tripolyphosphate hydrolysis which occurs prior to release of AdoMet from the enzyme. In Prochlorococcus marinus (strain NATL1A), this protein is S-adenosylmethionine synthase.